Here is a 42-residue protein sequence, read N- to C-terminus: Large ribosomal subunit protein bL36 (42 aa).

It belongs to the bacterial ribosomal protein bL36 family.

The protein is Large ribosomal subunit protein bL36 of Wolbachia pipientis subsp. Culex pipiens (strain wPip).